We begin with the raw amino-acid sequence, 689 residues long: Sodium-dependent phosphate transport protein 2B (689 aa).

A disordered region spans residues 1-41; it reads MAPWPELGDAQPNPDKYLEGAAGQQPTAPDKSKETNKNNTE. Residues 1–100 are Cytoplasmic-facing; it reads MAPWPELGDA…LCVFQGIGRL (100 aa). The chain crosses the membrane as a helical span at residues 101–121; sequence ILLLGFLYFFVCSLDILSSAF. At 122-135 the chain is on the extracellular side; that stretch reads QLVGGKMAGQFFSN. The chain crosses the membrane as a helical span at residues 136–156; sequence SSIMSNPLLGLVIGVLVTVLV. Residues 157–212 lie on the Cytoplasmic side of the membrane; sequence QSSSTSTSIVVSMVSSSLLTVRAAIPIIMGANIGTSITNTIVALMQVGDRSEFRRA. A helical membrane pass occupies residues 213 to 233; that stretch reads FAGATVHDFFNWLSVLVLLPV. At 234–362 the chain is on the extracellular side; it reads EVATHYLEII…FVNFHLPDLA (129 aa). Asn-294, Asn-307, and Asn-320 each carry an N-linked (GlcNAc...) asparagine glycan. Cys-302 and Cys-349 form a disulfide bridge. The chain crosses the membrane as a helical span at residues 363-383; it reads VGTILLILSLLVLCGCLIMIV. The Cytoplasmic segment spans residues 384–407; sequence KILGSVLKGQVATVIKKTINTDFP. A helical membrane pass occupies residues 408 to 428; that stretch reads FPFAWLTGYLAILVGAGMTFI. Residues 429-485 lie on the Extracellular side of the membrane; the sequence is VQSSSVFTSALTPLIGIGVITIERAYPLTLGSNIGTTTTAILAALASPGNALRSSLQ. The chain crosses the membrane as a helical span at residues 486-506; the sequence is IALCHFFFNISGILLWYPIPF. Residues 507-525 lie on the Cytoplasmic side of the membrane; sequence TRLPIRMAKGLGNISAKYR. Residues 526 to 546 traverse the membrane as a helical segment; the sequence is WFAVFYLIIFFFLIPLTVFGL. The Extracellular portion of the chain corresponds to 547–552; that stretch reads SLAGWR. Residues 553-573 traverse the membrane as a helical segment; it reads VLVGVGVPVVFIIILVLCLRL. The Cytoplasmic portion of the chain corresponds to 574–687; that stretch reads LQSRCPRVLP…PASDSKTECT (114 aa).

It belongs to the SLC34A transporter family.

It is found in the apical cell membrane. The catalysed reaction is 3 Na(+)(out) + phosphate(out) = 3 Na(+)(in) + phosphate(in). Its function is as follows. Involved in actively transporting phosphate into cells via Na(+) cotransport. This chain is Sodium-dependent phosphate transport protein 2B (SLC34A2), found in Pongo abelii (Sumatran orangutan).